Reading from the N-terminus, the 60-residue chain is Truncated protein A35 homolog (60 aa).

The protein belongs to the chordopoxvirinae A35 protein family.

This chain is Truncated protein A35 homolog (A38R), found in Variola virus (isolate Human/India/Ind3/1967) (VARV).